The sequence spans 613 residues: Ribosome-associated molecular chaperone SSB1 (613 aa).

The tract at residues 1–391 is nucleotide binding domain (NBD); sequence MAEGVFPGAI…ILTGQSTSDE (391 aa). Residues 16–18, K73, 205–207, 271–278, and G342 contribute to the ATP site; these read TTY, GGT, and ERAKRTLS. The interval 392–402 is inter-domain linker; the sequence is TKDLLLLDVAP. Residues 403-613 form a substrate binding domain (SBD) region; that stretch reads LSLGVGMAGD…RAVTKAMSTR (211 aa). The tract at residues 516–612 is lid domain (SBDalpha); sequence SEEIEQMVNQ…KRAVTKAMST (97 aa). Residues 574 to 582 carry the Nuclear export signal motif; the sequence is VEAALADAF.

The protein belongs to the heat shock protein 70 family. Ssb-type Hsp70 subfamily. As to quaternary structure, binds to ribosomes. Binds close to the ribosomal tunnel exit via contacts with both ribosomal proteins and rRNA. Directly interacts with nascent polypeptides. This interaction is dependent on the ribosome-associated complex (RAC). Interacts with SSE1. Interacts with FES1.

The protein resides in the cytoplasm. The catalysed reaction is ATP + H2O = ADP + phosphate + H(+). Functionally, ribosome-bound, Hsp70-type chaperone that assists in the cotranslational folding of newly synthesized proteins in the cytosol. Stimulates folding by interacting with nascent chains, binding to short, largely hydrophobic sequences exposed by unfolded proteins, thereby stabilizing longer, more slowly translated, and aggregation-prone nascent polypeptides and domains that cannot fold stably until fully synthesized. The Hsp70-protein substrate interaction depends on ATP-binding and on allosteric regulation between the NBD and the SBD. The ATP-bound state is characterized by a fast exchange rate of substrate (low affinity state), while in the ADP-bound state exchange is much slower (high affinity state). During the Hsp70 cycle, the chaperone switches between the ATP-bound state (open conformation) and the ADP-bound state (closed conformation) by major conformational rearrangements involving mainly the lid domain. Ssb cooperates with a specific Hsp40/Hsp70 co-chaperone termed the ribosome-associated complex (RAC), which stimulates the ATPase activity of the ribosome-associated pool of Ssbs and switches it to the high affinity substrate binding state. Hsp110 chaperone SSE1 and FES1 act as nucleotide exchange factors that cause substrate release. The sequence is that of Ribosome-associated molecular chaperone SSB1 (SSB1) from Kluyveromyces marxianus (Yeast).